A 295-amino-acid polypeptide reads, in one-letter code: uncharacterized protein (295 aa).

An N-terminal signal peptide occupies residues Met1–Ala19. The interval Lys274–Lys295 is disordered. The span at Asn276–Lys288 shows a compositional bias: low complexity.

This is an uncharacterized protein from Rickettsia typhi (strain ATCC VR-144 / Wilmington).